A 219-amino-acid chain; its full sequence is Transcriptional regulator AcuR (219 aa).

Positions 1-25 (MPLTDTPPSVPQKPRRGRPRGAPDA) are disordered. Residues 26-86 (SLAHQSLIRA…ALIEAYDTYF (61 aa)) form the HTH tetR-type domain. The H-T-H motif DNA-binding region spans 49–68 (GVDEILKAARVPKGSFYHYF).

A transcriptional repressor for its operon. Probably binds to 2 operator sequences in the promoter. This Cereibacter sphaeroides (strain ATCC 17023 / DSM 158 / JCM 6121 / CCUG 31486 / LMG 2827 / NBRC 12203 / NCIMB 8253 / ATH 2.4.1.) (Rhodobacter sphaeroides) protein is Transcriptional regulator AcuR (acuR).